Reading from the N-terminus, the 104-residue chain is Replication restart protein PriB (104 aa).

Positions 1 to 101 (MTNRLTLSGT…LHAEQIELID (101 aa)) constitute an SSB domain.

This sequence belongs to the PriB family. Homodimer. Interacts with PriA and DnaT. Component of the replication restart primosome. Primosome assembly occurs via a 'hand-off' mechanism. PriA binds to replication forks, subsequently PriB then DnaT bind; DnaT then displaces ssDNA to generate the helicase loading substrate.

Its function is as follows. Involved in the restart of stalled replication forks, which reloads the replicative helicase on sites other than the origin of replication; the PriA-PriB pathway is the major replication restart pathway. During primosome assembly it facilitates complex formation between PriA and DnaT on DNA; stabilizes PriA on DNA. Stimulates the DNA unwinding activity of PriA helicase. The chain is Replication restart protein PriB from Salmonella typhi.